The primary structure comprises 604 residues: Serine/threonine-protein phosphatase 2B catalytic subunit A2 (604 aa).

The segment at 21–48 (NKTERPQSSTTPIDSKASTVAAANSTAT) is disordered. The residue at position 31 (Thr-31) is a Phosphothreonine. Residues 35–48 (SKASTVAAANSTAT) show a composition bias toward low complexity. Asp-144, His-146, and Asp-172 together coordinate Fe cation. Zn(2+) is bound by residues Asp-172 and Asn-204. Catalysis depends on His-205, which acts as the Proton donor. 2 residues coordinate Zn(2+): His-253 and His-359. Positions 470 to 497 (KKLPQAGKSEATPQPATSASPKHASILD) are disordered. Polar residues predominate over residues 480-489 (ATPQPATSAS). Residues Ser-489 and Ser-520 each carry the phosphoserine modification. Positions 501–523 (RRKALRNKILAVAKVSRMYSVLR) are calmodulin-binding.

It belongs to the PPP phosphatase family. PP-2B subfamily. Composed of two components (A and B), the A component is the catalytic subunit and the B component confers calcium sensitivity. It depends on Fe(3+) as a cofactor. Requires Zn(2+) as cofactor.

The enzyme catalyses O-phospho-L-seryl-[protein] + H2O = L-seryl-[protein] + phosphate. It carries out the reaction O-phospho-L-threonyl-[protein] + H2O = L-threonyl-[protein] + phosphate. Its function is as follows. Calcium-dependent, calmodulin-stimulated protein phosphatase. This subunit may have a role in the calmodulin activation of calcineurin. The chain is Serine/threonine-protein phosphatase 2B catalytic subunit A2 (CMP2) from Saccharomyces cerevisiae (strain ATCC 204508 / S288c) (Baker's yeast).